Consider the following 156-residue polypeptide: Arginine repressor (156 aa).

It belongs to the ArgR family.

It localises to the cytoplasm. It participates in amino-acid biosynthesis; L-arginine biosynthesis [regulation]. In terms of biological role, regulates arginine biosynthesis genes. The protein is Arginine repressor of Shewanella halifaxensis (strain HAW-EB4).